The chain runs to 166 residues: NAD(P)H-quinone oxidoreductase subunit I, chloroplastic (166 aa).

4Fe-4S ferredoxin-type domains follow at residues 55–84 (GRIHFEFDKCIACEVCVRVCPIDLPVVDWK) and 95–124 (LNYSIDFGICIFCGNCVEYCPTNCLSMTEE). Cys64, Cys67, Cys70, Cys74, Cys104, Cys107, Cys110, and Cys114 together coordinate [4Fe-4S] cluster.

The protein belongs to the complex I 23 kDa subunit family. NDH is composed of at least 16 different subunits, 5 of which are encoded in the nucleus. [4Fe-4S] cluster serves as cofactor.

It localises to the plastid. The protein resides in the chloroplast thylakoid membrane. It carries out the reaction a plastoquinone + NADH + (n+1) H(+)(in) = a plastoquinol + NAD(+) + n H(+)(out). The catalysed reaction is a plastoquinone + NADPH + (n+1) H(+)(in) = a plastoquinol + NADP(+) + n H(+)(out). In terms of biological role, NDH shuttles electrons from NAD(P)H:plastoquinone, via FMN and iron-sulfur (Fe-S) centers, to quinones in the photosynthetic chain and possibly in a chloroplast respiratory chain. The immediate electron acceptor for the enzyme in this species is believed to be plastoquinone. Couples the redox reaction to proton translocation, and thus conserves the redox energy in a proton gradient. The protein is NAD(P)H-quinone oxidoreductase subunit I, chloroplastic of Lasianthaea macrocephala (Lipochaeta macrocephala).